Consider the following 220-residue polypeptide: Orotate phosphoribosyltransferase (220 aa).

K26 serves as a coordination point for 5-phospho-alpha-D-ribose 1-diphosphate. Residue F34–F35 coordinates orotate. Residues Y72–K73, R99, K100, K103, H105, and D125–S133 each bind 5-phospho-alpha-D-ribose 1-diphosphate. Positions 129 and 157 each coordinate orotate.

It belongs to the purine/pyrimidine phosphoribosyltransferase family. PyrE subfamily. In terms of assembly, homodimer. The cofactor is Mg(2+).

It carries out the reaction orotidine 5'-phosphate + diphosphate = orotate + 5-phospho-alpha-D-ribose 1-diphosphate. Its pathway is pyrimidine metabolism; UMP biosynthesis via de novo pathway; UMP from orotate: step 1/2. Its function is as follows. Catalyzes the transfer of a ribosyl phosphate group from 5-phosphoribose 1-diphosphate to orotate, leading to the formation of orotidine monophosphate (OMP). This Nitrosococcus oceani (strain ATCC 19707 / BCRC 17464 / JCM 30415 / NCIMB 11848 / C-107) protein is Orotate phosphoribosyltransferase.